A 459-amino-acid polypeptide reads, in one-letter code: uncharacterized protein (459 aa).

The TRAM domain maps to 2–60; the sequence is NLRVKQKIPLKIKRMGINGEGIGFYKRTLVFVPGALKGEEIFCQITSVKHNFVQARLLT. [4Fe-4S] cluster contacts are provided by cysteine 73, cysteine 79, cysteine 82, and cysteine 162. Glutamine 284, tyrosine 313, aspartate 334, and aspartate 382 together coordinate S-adenosyl-L-methionine. The active-site Nucleophile is cysteine 409.

This sequence belongs to the class I-like SAM-binding methyltransferase superfamily. RNA M5U methyltransferase family.

This is an uncharacterized protein from Streptococcus mutans serotype c (strain ATCC 700610 / UA159).